The following is a 130-amino-acid chain: Ribosome biogenesis inhibitor MINAS-60 (130 aa).

Residues 61–130 (SKVQRIPTRP…RRRRPVTSSC (70 aa)) are disordered. The segment covering 109-130 (KGRRRRRRMRRRRRRRPVTSSC) has biased composition (basic residues).

Interacts with 60S ribosome assembly factors GTPBP4 and MRTO4.

Its subcellular location is the nucleus. It is found in the nucleolus. Acts as a late-stage inhibitor of pre-60S ribosome assembly by preventing pre-60S ribosome export from nucleus. This Mus musculus (Mouse) protein is Ribosome biogenesis inhibitor MINAS-60.